The chain runs to 128 residues: Calcitonin gene-related peptide 1 (128 aa).

The signal sequence occupies residues 1 to 25; the sequence is MGFQKFSPFLALSILVLLQAGSLHA. A propeptide spanning residues 26–80 is cleaved from the precursor; that stretch reads APFRSALESSPADPATLSEDEARLLLAALVQDYVQMKASELEQEQEREGSRIIAQ. Residues cysteine 84 and cysteine 89 are joined by a disulfide bond. Phenylalanine 119 bears the Phenylalanine amide mark. Positions 125–128 are excised as a propeptide; that stretch reads DLQA.

This sequence belongs to the calcitonin family. Expressed in spinal cord.

It is found in the secreted. Functionally, CGRP1/CALCA is a peptide hormone that induces vasodilation mediated by the CALCRL-RAMP1 receptor complex. Dilates a variety of vessels including the coronary, cerebral and systemic vasculature. Its abundance in the CNS also points toward a neurotransmitter or neuromodulator role. It also elevates platelet cAMP. CGRP1 can also bind and activate CALCR-RAMP1 (AMYR1) receptor complex. The polypeptide is Calcitonin gene-related peptide 1 (Homo sapiens (Human)).